The primary structure comprises 686 residues: Methionine--tRNA ligase (686 aa).

Residues 15–25 (PYANGPIHLGH) carry the 'HIGH' region motif. Residues cysteine 146, cysteine 149, cysteine 159, and cysteine 162 each coordinate Zn(2+). A 'KMSKS' region motif is present at residues 331-335 (KMSKS). Lysine 334 lines the ATP pocket. The 103-residue stretch at 584–686 (DFAKIDLRVA…AGVKAGSRVM (103 aa)) folds into the tRNA-binding domain.

The protein belongs to the class-I aminoacyl-tRNA synthetase family. MetG type 1 subfamily. In terms of assembly, homodimer. The cofactor is Zn(2+).

The protein resides in the cytoplasm. The catalysed reaction is tRNA(Met) + L-methionine + ATP = L-methionyl-tRNA(Met) + AMP + diphosphate. In terms of biological role, is required not only for elongation of protein synthesis but also for the initiation of all mRNA translation through initiator tRNA(fMet) aminoacylation. The chain is Methionine--tRNA ligase from Mannheimia succiniciproducens (strain KCTC 0769BP / MBEL55E).